Reading from the N-terminus, the 236-residue chain is Glucosamine-6-phosphate deaminase (236 aa).

Catalysis depends on Asp-62, which acts as the Proton acceptor; for enolization step. The active-site For ring-opening step is the Asn-128. The Proton acceptor; for ring-opening step role is filled by His-130. Glu-135 functions as the For ring-opening step in the catalytic mechanism.

Belongs to the glucosamine/galactosamine-6-phosphate isomerase family. NagB subfamily.

It catalyses the reaction alpha-D-glucosamine 6-phosphate + H2O = beta-D-fructose 6-phosphate + NH4(+). The protein operates within amino-sugar metabolism; N-acetylneuraminate degradation; D-fructose 6-phosphate from N-acetylneuraminate: step 5/5. In terms of biological role, catalyzes the reversible isomerization-deamination of glucosamine 6-phosphate (GlcN6P) to form fructose 6-phosphate (Fru6P) and ammonium ion. This chain is Glucosamine-6-phosphate deaminase, found in Oenococcus oeni (strain ATCC BAA-331 / PSU-1).